We begin with the raw amino-acid sequence, 263 residues long: Ribosomal RNA small subunit methyltransferase A (263 aa).

Residues N13, T15, G40, E61, D85, and N105 each contribute to the S-adenosyl-L-methionine site.

The protein belongs to the class I-like SAM-binding methyltransferase superfamily. rRNA adenine N(6)-methyltransferase family. RsmA subfamily.

Its subcellular location is the cytoplasm. It carries out the reaction adenosine(1518)/adenosine(1519) in 16S rRNA + 4 S-adenosyl-L-methionine = N(6)-dimethyladenosine(1518)/N(6)-dimethyladenosine(1519) in 16S rRNA + 4 S-adenosyl-L-homocysteine + 4 H(+). Specifically dimethylates two adjacent adenosines (A1518 and A1519) in the loop of a conserved hairpin near the 3'-end of 16S rRNA in the 30S particle. May play a critical role in biogenesis of 30S subunits. This chain is Ribosomal RNA small subunit methyltransferase A, found in Mycoplasma pneumoniae (strain ATCC 29342 / M129 / Subtype 1) (Mycoplasmoides pneumoniae).